Here is a 217-residue protein sequence, read N- to C-terminus: Heart- and neural crest derivatives-expressed protein 2 (217 aa).

Residues 76–116 are disordered; sequence DHSHYGGVPPGAGPPGLGGPRPVKRRGTANRKERRRTQSIN. Over residues 83–94 the composition is skewed to gly residues; it reads VPPGAGPPGLGG. The span at 97-112 shows a compositional bias: basic residues; the sequence is PVKRRGTANRKERRRT. The bHLH domain occupies 99 to 151; that stretch reads KRRGTANRKERRRTQSINSAFAELRECIPNVPADTKLSKIKTLRLATSYIAYL.

As to quaternary structure, efficient DNA binding requires dimerization with another bHLH protein. Forms homodimers and heterodimers with TCF3 gene products E12 and E47, HAND1 and HEY1, HEY2 and HEYL (hairy-related transcription factors).

It is found in the nucleus. Essential for cardiac morphogenesis, particularly for the formation of the right ventricle and of the aortic arch arteries. Required for vascular development and regulation of angiogenesis, possibly through a VEGF signaling pathway. Also plays an important role in limb development, particularly in the establishment of anterior-posterior polarization, acting as an upstream regulator of sonic hedgehog (SHH) induction in the limb bud. Is involved in the development of branchial arches, which give rise to unique structures in the head and neck. Binds DNA on E-box consensus sequence 5'-CANNTG-3'. The polypeptide is Heart- and neural crest derivatives-expressed protein 2 (Hand2) (Rattus norvegicus (Rat)).